The following is a 315-amino-acid chain: MASDQLRFLGSLEGHKGWVTAIATSQENPDMILTASRDKTIIVWQLTRDEDSYGYPKRILTGHNHFVSDVVISSDGQFALSSSWDHTLRLWDLNTGATTRRFVGHTSDVLSVSFSADNRQIVSGSRDKTIKLWNTLGECKYDIKDECHTEWVSCVRFSPNVSNPVIVSCGWDRVVKVWELSKFKLKTNHYGHTGYINTVSVSPDGSLAASGGKDGITMLWDLNEGKHLYSLEAGDIVNALVFSPNRYWLCAATASCVKIFDLESKSIVDELKPAYTDVQDEGRQPECVSIAWSADGQTLFAGFTDNQLRVWTVTS.

7 WD repeats span residues 14-54 (GHKG…DSYG), 62-101 (GHNH…TTRR), 104-144 (GHTS…YDIK), 147-188 (CHTE…LKTN), 191-230 (GHTG…HLYS), 232-270 (EAGD…IVDE), and 282-315 (GRQP…TVTS).

It belongs to the WD repeat G protein beta family. Ribosomal protein RACK1 subfamily.

Its function is as follows. Component of the ribosome, a large ribonucleoprotein complex responsible for the synthesis of proteins in the cell. The small ribosomal subunit (SSU) binds messenger RNAs (mRNAs) and translates the encoded message by selecting cognate aminoacyl-transfer RNA (tRNA) molecules. The large subunit (LSU) contains the ribosomal catalytic site termed the peptidyl transferase center (PTC), which catalyzes the formation of peptide bonds, thereby polymerizing the amino acids delivered by tRNAs into a polypeptide chain. The nascent polypeptides leave the ribosome through a tunnel in the LSU and interact with protein factors that function in enzymatic processing, targeting, and the membrane insertion of nascent chains at the exit of the ribosomal tunnel. Plays in important role in the regulation of vegetative growth and fruiting body development. Especially, positively regulates the expression of genes involved in fruiting body development such as FVFD30 and FVFD16, as well as genes encoding for lectins and hydrophobins. Also regulates the expression of genes involved in cAMP signaling pathway. The polypeptide is Cross-pathway control WD-repeat protein 2 (Flammulina velutipes (Agaricus velutipes)).